The sequence spans 764 residues: 5-methyltetrahydropteroyltriglutamate--homocysteine methyltransferase (764 aa).

Residues 16-19 (RELK) and K121 contribute to the 5-methyltetrahydropteroyltri-L-glutamate site. L-homocysteine is bound by residues 440–442 (IGS) and E493. Residues 440 to 442 (IGS) and E493 each bind L-methionine. Residues 524 to 525 (RC) and W570 each bind 5-methyltetrahydropteroyltri-L-glutamate. D608 serves as a coordination point for L-homocysteine. D608 provides a ligand contact to L-methionine. Position 614 (E614) interacts with 5-methyltetrahydropteroyltri-L-glutamate. The Zn(2+) site is built by H650, C652, and E674. Catalysis depends on H703, which acts as the Proton donor. A Zn(2+)-binding site is contributed by C735.

The protein belongs to the vitamin-B12 independent methionine synthase family. It depends on Zn(2+) as a cofactor.

It carries out the reaction 5-methyltetrahydropteroyltri-L-glutamate + L-homocysteine = tetrahydropteroyltri-L-glutamate + L-methionine. Its pathway is amino-acid biosynthesis; L-methionine biosynthesis via de novo pathway; L-methionine from L-homocysteine (MetE route): step 1/1. Its function is as follows. Catalyzes the transfer of a methyl group from 5-methyltetrahydrofolate to homocysteine resulting in methionine formation. This is 5-methyltetrahydropteroyltriglutamate--homocysteine methyltransferase from Burkholderia lata (strain ATCC 17760 / DSM 23089 / LMG 22485 / NCIMB 9086 / R18194 / 383).